The chain runs to 201 residues: Recombination protein RecR (201 aa).

The C4-type zinc finger occupies 57–72; the sequence is CADCRTFTEQEVCNIC. The 96-residue stretch at 81 to 176 folds into the Toprim domain; it reads GQICVVESPA…EASRIAHGVP (96 aa).

Belongs to the RecR family.

In terms of biological role, may play a role in DNA repair. It seems to be involved in an RecBC-independent recombinational process of DNA repair. It may act with RecF and RecO. The polypeptide is Recombination protein RecR (Shigella boydii serotype 4 (strain Sb227)).